The primary structure comprises 284 residues: Nitrogenase iron protein 1 (284 aa).

Glycine 17 to serine 24 serves as a coordination point for ATP. Cysteine 105 provides a ligand contact to [4Fe-4S] cluster. At arginine 108 the chain carries ADP-ribosylarginine; by dinitrogenase reductase ADP-ribosyltransferase. Cysteine 140 contacts [4Fe-4S] cluster.

This sequence belongs to the NifH/BchL/ChlL family. In terms of assembly, homodimer. [4Fe-4S] cluster is required as a cofactor. The reversible ADP-ribosylation of Arg-108 inactivates the nitrogenase reductase and regulates nitrogenase activity.

The enzyme catalyses N2 + 8 reduced [2Fe-2S]-[ferredoxin] + 16 ATP + 16 H2O = H2 + 8 oxidized [2Fe-2S]-[ferredoxin] + 2 NH4(+) + 16 ADP + 16 phosphate + 6 H(+). Its function is as follows. The key enzymatic reactions in nitrogen fixation are catalyzed by the nitrogenase complex, which has 2 components: the iron protein and the molybdenum-iron protein. This chain is Nitrogenase iron protein 1 (nifH1), found in Methanothermococcus thermolithotrophicus (Methanococcus thermolithotrophicus).